The sequence spans 310 residues: Methionyl-tRNA formyltransferase (310 aa).

(6S)-5,6,7,8-tetrahydrofolate is bound at residue 111-114 (SILP).

This sequence belongs to the Fmt family.

It catalyses the reaction L-methionyl-tRNA(fMet) + (6R)-10-formyltetrahydrofolate = N-formyl-L-methionyl-tRNA(fMet) + (6S)-5,6,7,8-tetrahydrofolate + H(+). In terms of biological role, attaches a formyl group to the free amino group of methionyl-tRNA(fMet). The formyl group appears to play a dual role in the initiator identity of N-formylmethionyl-tRNA by promoting its recognition by IF2 and preventing the misappropriation of this tRNA by the elongation apparatus. This chain is Methionyl-tRNA formyltransferase, found in Methylobacterium sp. (strain 4-46).